Consider the following 22-residue polypeptide: Peptide PGLa-B1 (22 aa).

Position 22 is a leucine amide (Leu-22).

In terms of tissue distribution, expressed by the skin glands.

The protein resides in the secreted. Functionally, has antibacterial and antifungal activity. The polypeptide is Peptide PGLa-B1 (Xenopus borealis (Kenyan clawed frog)).